Reading from the N-terminus, the 206-residue chain is MAEFTHLVNERRSASNFLSGHPITKEDLNEMFELVALAPSAFNLQHTKYVTVLDQDVKEKLKQAANGQYKVVSSSAVLLVLGDKQAYQQAADIYEGLKVLGILNKQEYDHMVQDTVSFYENRGEQFKRDEAIRNASLSAMMFMLSAKEKGWDTCPMIGFDAEAVKRILNIDDQFEVVMMITIGKEKTESRRPRGYRKPVNEFVEYM.

Residues 11 to 13 (RRS), 68 to 70 (QYK), 157 to 158 (IG), Arg-193, and Arg-196 contribute to the FMN site.

This sequence belongs to the nitroreductase family. In terms of assembly, homodimer. It depends on FMN as a cofactor.

The protein resides in the cytoplasm. In terms of biological role, putative nitroreductase that may contribute to the degradation of aromatic compounds. The chain is Putative NAD(P)H nitroreductase MhqN (mhqN) from Bacillus subtilis (strain 168).